Consider the following 124-residue polypeptide: MPTIQQLVRSERRKIHKKTKSPALQSCPQRRGVCTRVYTTTPKKPNSALRKVARVRLTSGFEVTAYIPGVGHNIQEHSVVLIRGGRIKDLPGVRYHVVRGTLDAAGVKDRRKSRSKYGTKKPKS.

2 disordered regions span residues 1-28 and 104-124; these read MPTI…QSCP and AAGV…KPKS. 2 stretches are compositionally biased toward basic residues: residues 11–20 and 109–124; these read ERRKIHKKTK and DRRK…KPKS.

The protein belongs to the universal ribosomal protein uS12 family. Part of the 30S ribosomal subunit.

It is found in the plastid. It localises to the chloroplast. Functionally, with S4 and S5 plays an important role in translational accuracy. Located at the interface of the 30S and 50S subunits. In Pyropia yezoensis (Susabi-nori), this protein is Small ribosomal subunit protein uS12c (rps12).